The chain runs to 196 residues: ECF RNA polymerase sigma factor SigM (196 aa).

The sigma-70 factor domain-2 stretch occupies residues 39-105; sequence LFRRHHRQLH…ACLDRLRRAK (67 aa). A Polymerase core binding motif is present at residues 63-66; sequence DALQ. The sigma-70 factor domain-4 stretch occupies residues 130-181; it reads AVQRALMRLPVEQRAAVVAVDMQGYSIADTARMLGVAEGTVKSRCARARARL. A DNA-binding region (H-T-H motif) is located at residues 156 to 175; sequence IADTARMLGVAEGTVKSRCA.

Belongs to the sigma-70 factor family. ECF subfamily. Interacts transiently with the RNA polymerase catalytic core formed by RpoA, RpoB, RpoC and RpoZ (2 alpha, 1 beta, 1 beta' and 1 omega subunit) to form the RNA polymerase holoenzyme that can initiate transcription. Interacts (via sigma-70 factor domain-4) with anti-sigma-M factor RsmA (AC L7N5D7).

Functionally, sigma factors are initiation factors that promote the attachment of RNA polymerase to specific initiation sites and are then released. Extracytoplasmic function (ECF) sigma factors are held in an inactive form by an anti-sigma factor (RsaM, AC L7N5D7) until released by regulated intramembrane proteolysis. This sigma factor is required for the synthesis of surface or secreted molecules. In Mycobacterium tuberculosis (strain ATCC 25618 / H37Rv), this protein is ECF RNA polymerase sigma factor SigM (sigM).